The sequence spans 305 residues: Serine/threonine-protein kinase 16 (305 aa).

Gly-2 is lipidated: N-myristoyl glycine. 2 S-palmitoyl cysteine lipidation sites follow: Cys-6 and Cys-8. Residues 20–293 (YLFVQKLGEG…PVLLSQLEAL (274 aa)) enclose the Protein kinase domain. Residues 26 to 34 (LGEGGFSYV) and Lys-49 each bind ATP. Asp-148 serves as the catalytic Proton acceptor. An activation loop region spans residues 166–202 (DLGSMNQACIQVEGSRQALALQDWAAQRCTISYRAPE). Ser-197 bears the Phosphoserine; by autocatalysis mark. A Phosphotyrosine; by autocatalysis modification is found at Tyr-198.

It belongs to the protein kinase superfamily. Ser/Thr protein kinase family. In terms of assembly, monomer. Interacts with DRG1 (via its N-terminal); the interaction phosphorylates DRG1. Mainly autophosphorylated on serine/threonine residues. Also autophosphorylated on Tyr-198. In terms of tissue distribution, ubiquitously expressed at low levels. Relatively higher levels in testis, kidney and liver.

The protein resides in the cytoplasm. Its subcellular location is the perinuclear region. It localises to the membrane. The enzyme catalyses L-seryl-[protein] + ATP = O-phospho-L-seryl-[protein] + ADP + H(+). It carries out the reaction L-threonyl-[protein] + ATP = O-phospho-L-threonyl-[protein] + ADP + H(+). It catalyses the reaction L-tyrosyl-[protein] + ATP = O-phospho-L-tyrosyl-[protein] + ADP + H(+). Membrane-associated protein kinase that phosphorylates on serine and threonine residues. In vitro substrates include DRG1, ENO1 and EIF4EBP1. Also autophosphorylates. May be involved in secretory vesicle trafficking or intracellular signaling. May have a role in regulating stromal-epithelial interactions that occur during ductal morphogenesis in the mammary gland. May be involved in TGF-beta signaling. Able to autophosphorylate on Tyr residue; it is however unclear whether it has tyrosine-protein kinase toward other proteins. This is Serine/threonine-protein kinase 16 (Stk16) from Mus musculus (Mouse).